Consider the following 370-residue polypeptide: MKFARSGAAVSLLAAGTLVLTACGGGTNSSSSGAGGTSGSVHCGGKKELHSSGSTAQENAMEQFVYAYVRSCPGYTLDYNANGSGAGVTQFLNNETDFAGSDVPLNPSTGQPDRSAERCGSPAWDLPTVFGPIAITYNIKGVSTLNLDGPTTAKIFNGTITVWNDPQIQALNSGTDLPPTPISVIFRSDKSGTSDNFQKYLDGASNGAWGKGASETFNGGVGVGASGNNGTSALLQTTDGSITYNEWSFAVGKQLNMAQIITSAGPDPVAITTESVGKTIAGAKIMGQGNDLVLDTSSFYRPTQPGSYPIVLATYEIVCSKYPDATTGTAVRAFMQAAIGPGQEGLDQYGSIPLPKSFQAKLAAAVNAIS.

The first 22 residues, 1-22, serve as a signal peptide directing secretion; that stretch reads MKFARSGAAVSLLAAGTLVLTA. A lipid anchor (N-palmitoyl cysteine) is attached at cysteine 23. A lipid anchor (S-diacylglycerol cysteine) is attached at cysteine 23. Phosphate-binding positions include 54 to 56, serine 84, aspartate 102, and 191 to 193; these read STA and SGT.

The protein belongs to the PstS family. The complex is composed of two ATP-binding proteins (PstB), two transmembrane proteins (PstC and PstA) and a solute-binding protein (PstS).

The protein localises to the cell membrane. Functionally, functions in inorganic phosphate uptake, although probably not the main uptake protein under phosphate starvation. Part of the ABC transporter complex PstSACB involved in phosphate import. This Mycobacterium tuberculosis (strain ATCC 25618 / H37Rv) protein is Phosphate-binding protein PstS 2 (pstS2).